The sequence spans 276 residues: Halorhodopsin (276 aa).

Positions 1 to 21 are excised as a propeptide; that stretch reads MTAVSTTATTVLQATQSDVLQ. Over 22–25 the chain is Extracellular; sequence EIQS. The chain crosses the membrane as a helical span at residues 26–51; sequence NFLLNSSIWVNIALAGVVILLFVAMG. Residues 52–57 lie on the Cytoplasmic side of the membrane; sequence RDLESP. The chain crosses the membrane as a helical span at residues 58–81; it reads RAKLIWVATMLVPLVSISSYAGLA. Residues 82–105 are Extracellular-facing; that stretch reads SGLTVGFLQMPPGHALAGQEVLSP. The helical transmembrane segment at 106–127 threads the bilayer; sequence WGRYLTWTFSTPMILLALGLLA. Residues 128-130 are Cytoplasmic-facing; that stretch reads DTD. Residues 131–154 traverse the membrane as a helical segment; the sequence is IASLFTAITMDIGMCVTGLAAALI. At 155-157 the chain is on the extracellular side; it reads TSS. A helical transmembrane segment spans residues 158–180; that stretch reads HLLRWVFYGISCAFFVAVLYVLL. Residues 181–192 lie on the Cytoplasmic side of the membrane; the sequence is VQWPADAEAAGT. The helical transmembrane segment at 193–216 threads the bilayer; that stretch reads SEIFGTLKILTVVLWLGYPILWAL. Topologically, residues 217 to 225 are extracellular; the sequence is GSEGVALLS. The helical transmembrane segment at 226–254 threads the bilayer; sequence VGVTSWGYSGLDILAKYVFAFLLLRWVAA. Lys-241 carries the N6-(retinylidene)lysine modification. Residues 255–276 are Cytoplasmic-facing; that stretch reads NEGTVSGSGMGIGSGGAAPADD.

It belongs to the archaeal/bacterial/fungal opsin family.

It localises to the cell membrane. Its function is as follows. Light-driven anion pump. This is Halorhodopsin from Halobacterium halobium (strain shark).